Consider the following 382-residue polypeptide: Anhydro-N-acetylmuramic acid kinase (382 aa).

An ATP-binding site is contributed by Gly22–Asp29.

Belongs to the anhydro-N-acetylmuramic acid kinase family.

It carries out the reaction 1,6-anhydro-N-acetyl-beta-muramate + ATP + H2O = N-acetyl-D-muramate 6-phosphate + ADP + H(+). It functions in the pathway amino-sugar metabolism; 1,6-anhydro-N-acetylmuramate degradation. It participates in cell wall biogenesis; peptidoglycan recycling. In terms of biological role, catalyzes the specific phosphorylation of 1,6-anhydro-N-acetylmuramic acid (anhMurNAc) with the simultaneous cleavage of the 1,6-anhydro ring, generating MurNAc-6-P. Is required for the utilization of anhMurNAc either imported from the medium or derived from its own cell wall murein, and thus plays a role in cell wall recycling. This chain is Anhydro-N-acetylmuramic acid kinase, found in Burkholderia ambifaria (strain ATCC BAA-244 / DSM 16087 / CCUG 44356 / LMG 19182 / AMMD) (Burkholderia cepacia (strain AMMD)).